The following is a 111-amino-acid chain: SPbeta prophage-derived uncharacterized protein YolC (111 aa).

A signal peptide spans 1–25 (MKKRLIGFLVLVPALIMSGITLIEA).

The sequence is that of SPbeta prophage-derived uncharacterized protein YolC (yolC) from Bacillus subtilis (strain 168).